A 208-amino-acid chain; its full sequence is Kininogen-1b (208 aa).

The N-terminal stretch at 1–23 (MRLWFCLSFFIVLCLEHFPETLA) is a signal peptide. The segment covering 27 to 44 (NVPESEEKTEQYLRDLPK) has biased composition (basic and acidic residues). Residues 27 to 208 (NVPESEEKTE…RGKFHSQSHV (182 aa)) are disordered.

This sequence belongs to the bradykinin-related peptide family. As to expression, expressed by the skin glands.

It is found in the secreted. Functionally, in vitro, produces constriction of guinea pig ileum smooth muscle. May target bradykinin receptors (BDKRB). The sequence is that of Kininogen-1b from Bombina maxima (Giant fire-bellied toad).